The primary structure comprises 87 residues: MANIKSAKKRIKVTEKKTLRNKMIKSALKTAIKKFEVAVQANNKAEAATLYVEAARALDMSASKGVVHKNMAARKKSRLAAKLNAMA.

It belongs to the bacterial ribosomal protein bS20 family.

Functionally, binds directly to 16S ribosomal RNA. In Clostridium perfringens (strain 13 / Type A), this protein is Small ribosomal subunit protein bS20.